The sequence spans 529 residues: MHHNYYLSPLAVALALGMVSPAKAADPILLQNASFSEVKQKFALSTQGVAVAKDSLSFVSEHTDRNKVTHVRMQQKYVGFPVYGGYAIMHSMNTAKSLAATTQSTVEMNGVVYQGLQTELGQPDASFVQNADKALQQFKAKYANQNVGDEKVIPMVYIDKDNQAHWAYKVSIRVNHLDKAPERPTAIIDARTQQPFVQWNDIKTERVSVKGSGFGGNKKMGYYEFGKDFPYLDLTRDANNATCYMENESVKVIDMKHKYSSVKAAMSFACSTTDSDIYSTGYREDNGALSPSNDALYAGYVIKHMYTDWYGVNVLSNSNGSPMQLVMRVHYGDGYENAYWDGEQMTFGCGDRMMYPLVSLGVGAHEISHGFTEQHSGLEYYGQSGGMNESFSDMAAQAAEHYSVGKSSWQIGGEIMKESSGYDALRYMDKPSRDGESIDTADEYYSGLDVHYSSGVYNHLFYILATKPNWDTRKAFDVMVKANMDYWTPYSSFDEGGCGVLSAAKDLGFSLNDVKSSLQAVAINYSKCH.

The N-terminal stretch at 1–24 (MHHNYYLSPLAVALALGMVSPAKA) is a signal peptide. The propeptide occupies 25–204 (ADPILLQNAS…PFVQWNDIKT (180 aa)). Histidine 365 lines the Zn(2+) pocket. The active site involves glutamate 366. The Zn(2+) site is built by histidine 369 and glutamate 389. The active-site Proton donor is histidine 451.

It belongs to the peptidase M4 family. Zn(2+) serves as cofactor.

This is Zinc metalloproteinase MspA (mspA) from Legionella longbeachae.